Consider the following 312-residue polypeptide: Pectinesterase inhibitor 10 (312 aa).

The first 25 residues, 1-25 (MNILSQTQILHLSIAILLFITTSSS), serve as a signal peptide directing secretion. Composition is skewed to low complexity over residues 24 to 36 (SSSL…SPSL) and 44 to 55 (SPSSAPPSSLSP). Residues 24–141 (SSSLSPSSSS…PSSSSSTYSN (118 aa)) are disordered. The segment covering 56 to 75 (SSPPPLSLSPSSPPPPPPSS) has biased composition (pro residues). Low complexity-rich tracts occupy residues 76–85 (SPLSSLSPSL) and 93–104 (SPSSAPPSSLSP). The segment covering 105 to 124 (SSPPPLSLSPSSPPPPPPSS) has biased composition (pro residues). Residues 125 to 137 (SPLSSLSPSSSSS) are compositionally biased toward low complexity. N-linked (GlcNAc...) asparagine glycosylation is found at N141, N153, N185, and N200. C152 and C161 are joined by a disulfide. C218 and C268 are oxidised to a cystine.

It belongs to the PMEI family.

The protein resides in the secreted. Its subcellular location is the extracellular space. It is found in the apoplast. Functionally, pectin methylesterase (PME) inhibitor involved in the maintenance of cell wall integrity in response to necrotrophic pathogens. Modulates PME activity and pectin methylesterification during infection by Botrytis cinerea and contributes to resistance against the pathogen. The sequence is that of Pectinesterase inhibitor 10 from Arabidopsis thaliana (Mouse-ear cress).